The sequence spans 452 residues: Probable ECA polymerase (452 aa).

11 helical membrane passes run 6–26, 37–57, 63–83, 118–138, 155–175, 181–201, 207–227, 228–248, 341–361, 378–398, and 410–430; these read FSGL…LTWF, VFFS…TSVL, VGVA…CFYG, VILM…NGFL, GVAL…VYFL, AWLF…MIVG, IIIA…ISLW, MLAA…LKRY, LVVM…GLII, YKAA…IVLV, and VFFL…FWLF.

It belongs to the WzyE family. In terms of assembly, probably part of a complex composed of WzxE, WzyE and WzzE.

It is found in the cell inner membrane. The protein operates within bacterial outer membrane biogenesis; enterobacterial common antigen biosynthesis. In terms of biological role, probably involved in the polymerization of enterobacterial common antigen (ECA) trisaccharide repeat units. The protein is Probable ECA polymerase of Salmonella gallinarum (strain 287/91 / NCTC 13346).